Consider the following 370-residue polypeptide: 3-dehydroquinate synthase (370 aa).

NAD(+) contacts are provided by residues 112–116 (GVIGD), 136–137 (TT), Lys-149, Lys-158, and 176–179 (TLKT). Positions 191, 256, and 273 each coordinate Zn(2+).

The protein belongs to the sugar phosphate cyclases superfamily. Dehydroquinate synthase family. The cofactor is Co(2+). Requires Zn(2+) as cofactor. NAD(+) is required as a cofactor.

It localises to the cytoplasm. It carries out the reaction 7-phospho-2-dehydro-3-deoxy-D-arabino-heptonate = 3-dehydroquinate + phosphate. The protein operates within metabolic intermediate biosynthesis; chorismate biosynthesis; chorismate from D-erythrose 4-phosphate and phosphoenolpyruvate: step 2/7. In terms of biological role, catalyzes the conversion of 3-deoxy-D-arabino-heptulosonate 7-phosphate (DAHP) to dehydroquinate (DHQ). This chain is 3-dehydroquinate synthase, found in Prochlorococcus marinus (strain MIT 9211).